Here is a 149-residue protein sequence, read N- to C-terminus: Thioredoxin-like protein 4B (149 aa).

Belongs to the DIM1 family. As to quaternary structure, homodimer. Interacts with the U5-102 kDa protein subunit of the spliceosome.

It localises to the nucleus. Essential role in pre-mRNA splicing. Required in cell cycle progression for S/G(2) transition. This chain is Thioredoxin-like protein 4B (TXNL4B), found in Homo sapiens (Human).